The primary structure comprises 315 residues: Methionyl-tRNA formyltransferase (315 aa).

The interval 2–189 is N-terminal domain; sequence SESLRIIFAG…LITTLKQLAD (188 aa). Position 113 to 116 (113 to 116) interacts with (6S)-5,6,7,8-tetrahydrofolate; the sequence is SLLP. Residues 210 to 315 are C-terminal domain; the sequence is KEEARIDWSL…EWFVPGNRLA (106 aa).

This sequence belongs to the Fmt family.

The catalysed reaction is L-methionyl-tRNA(fMet) + (6R)-10-formyltetrahydrofolate = N-formyl-L-methionyl-tRNA(fMet) + (6S)-5,6,7,8-tetrahydrofolate + H(+). Attaches a formyl group to the free amino group of methionyl-tRNA(fMet). The formyl group appears to play a dual role in the initiator identity of N-formylmethionyl-tRNA by promoting its recognition by IF2 and preventing the misappropriation of this tRNA by the elongation apparatus. This is Methionyl-tRNA formyltransferase from Escherichia coli O6:H1 (strain CFT073 / ATCC 700928 / UPEC).